Reading from the N-terminus, the 559-residue chain is Formate--tetrahydrofolate ligase (559 aa).

68 to 75 (TPAGEGKT) serves as a coordination point for ATP.

It belongs to the formate--tetrahydrofolate ligase family. Homotetramer.

It catalyses the reaction (6S)-5,6,7,8-tetrahydrofolate + formate + ATP = (6R)-10-formyltetrahydrofolate + ADP + phosphate. The protein operates within one-carbon metabolism; tetrahydrofolate interconversion. This chain is Formate--tetrahydrofolate ligase, found in Moorella thermoacetica (Clostridium thermoaceticum).